A 488-amino-acid polypeptide reads, in one-letter code: V-type proton ATPase subunit B 1 (488 aa).

This sequence belongs to the ATPase alpha/beta chains family. In terms of assembly, V-ATPase is a heteromultimeric enzyme composed of a peripheral catalytic V1 complex (main components: subunits A, B, C, D, E, and F) attached to an integral membrane V0 proton pore complex (main component: the proteolipid protein).

Its function is as follows. Non-catalytic subunit of the peripheral V1 complex of vacuolar ATPase. V-ATPase is responsible for acidifying a variety of intracellular compartments in eukaryotic cells. In Hordeum vulgare (Barley), this protein is V-type proton ATPase subunit B 1.